A 437-amino-acid polypeptide reads, in one-letter code: Leucine-rich repeat flightless-interacting protein 2 (437 aa).

Ser18 is modified (phosphoserine). Positions 22-49 form a coiled coil; that stretch reads EALSNIAREAEARLAAKRAARAEARDIR. The span at 33-62 shows a compositional bias: basic and acidic residues; that stretch reads ARLAAKRAARAEARDIRMRELERQQRESSS. The tract at residues 33–152 is disordered; it reads ARLAAKRAAR…DTSLSELRES (120 aa). Polar residues predominate over residues 63–74; the sequence is KDITGTHWSRAS. The segment covering 77 to 105 has biased composition (basic and acidic residues); it reads KRRDMMYDSIKDRSSRVSSLLDEKSDKQY. Residues 110-139 are compositionally biased toward polar residues; that stretch reads TRPSSRNSASATTPLSGNSSRRGSGDTSSL. Residues Ser114, Ser117, Ser125, Ser129, and Ser133 each carry the phosphoserine modification. Thr136 carries the post-translational modification Phosphothreonine. Phosphoserine is present on residues Ser137 and Ser138. 2 coiled-coil regions span residues 143–239 and 282–430; these read DTSL…LIEK and LDVR…KANR.

Belongs to the LRRFIP family. In terms of assembly, interacts with DVL3 and FLII. Weakly interacts with MYD88 in resting cells. Following LPS-stimulation, the interaction with MYD88 is rapidly enhanced; the complex gradually dissociates to basal levels after 6 hours of stimulation. Interaction with MYD88 is regulated by LPS-induced phosphorylation. In the presence of LPS, competes with FLII for MYD88-binding.

May function as activator of the canonical Wnt signaling pathway, in association with DVL3, upstream of CTNNB1/beta-catenin. Positively regulates Toll-like receptor (TLR) signaling in response to agonist probably by competing with the negative FLII regulator for MYD88-binding. The polypeptide is Leucine-rich repeat flightless-interacting protein 2 (Lrrfip2) (Rattus norvegicus (Rat)).